Reading from the N-terminus, the 463-residue chain is MRLLVSCVDSGSIKEVLCNIGTDTSVQSALQPFHVAPHLAEGLKAYVDRMWVISEDEAILARNSGVVELVKISKHLKENEALQVDPKGESKNEKSLSDDLPKFDISEFEITSSVSDLFDDAKLESLSSKSVKRTKLVDGFVTLCPIKKDSSNNTFVAATKSGLLHIIKKGEDKKLIKLASLGLKAPVEFLQLYDLEDTDTDKYIFAYGGEENLIKLVEIDSSFQSLKQIWEAKNVKNDRLDMRVPVWPMALRFLEPSPGKTEKGKLNYQFAAITRWSHLTKYSTQHGRKPFAQIDLLPNREPLSQMEVFDAKGENVVSSLGNFQSETFNELNVITTDYKKNVFKFDGNGRMLGKVGRDDITGSSTYIHVHDGKYLLQGGLDRYVRIFDIKTNKMLVKVYVGSRINFIVMLDDVEIEMPLSPSAKAAKGKQKRKVTELEEDADELWNKLEGKVAASKASKKSKI.

It belongs to the NSA1 family. As to quaternary structure, component of the pre-66S ribosomal particle. Interacts with NOP7, RRP1 and RRP5.

Its subcellular location is the nucleus. The protein localises to the nucleolus. Its function is as follows. Involved in the biogenesis of the 60S ribosomal subunit. This Saccharomyces cerevisiae (strain ATCC 204508 / S288c) (Baker's yeast) protein is Ribosome biogenesis protein NSA1 (NSA1).